The primary structure comprises 438 residues: Porin AaxA (438 aa).

A signal peptide spans 1–21 (MISFRFLLLSGLCALGISSYA).

This sequence belongs to the OprB family.

It localises to the cell outer membrane. Its function is as follows. Facilitates L-arginine uptake, as part of the AaxABC system. The arginine uptake by the bacterium in the macrophage may be a virulence factor against the host innate immune response. The sequence is that of Porin AaxA (aaxA) from Chlamydia pneumoniae (Chlamydophila pneumoniae).